Here is a 1363-residue protein sequence, read N- to C-terminus: Insulin-like peptide receptor (1363 aa).

The first 29 residues, 1–29 (MRVVDKMAGLMWAALTLVIGLGLLVPSNG), serve as a signal peptide directing secretion. N-linked (GlcNAc...) asparagine glycans are attached at residues Asn-51, Asn-97, Asn-137, Asn-278, Asn-483, Asn-599, Asn-617, Asn-665, Asn-666, Asn-711, Asn-732, Asn-736, Asn-743, Asn-816, Asn-885, and Asn-898. Fibronectin type-III domains follow at residues 473-586 (SFSR…TDAD) and 590-680 (HPQD…CPKS). Fibronectin type-III domains are found at residues 712 to 804 (ETRA…LART) and 813 to 912 (IPGN…VEEE). Topologically, residues 721–928 (ELPVTARPFY…QDPQQQVPVS (208 aa)) are extracellular. The tract at residues 739 to 759 (LPSTNRTVPPTPTPNPNPQLE) is disordered. A helical membrane pass occupies residues 929 to 949 (LMIGMGVGFSLLLILAVIFGI). At 950-1363 (WYCTKKRFGD…NLRIPKSTLC (414 aa)) the chain is on the cytoplasmic side. One can recognise a Protein kinase domain in the interval 994 to 1283 (ITLIRELGQG…EIVEILSPEL (290 aa)). ATP-binding positions include 1000–1008 (LGQGSFGMV) and Lys-1028. The segment at 1091 to 1117 (PEEDVGLSDSPASNEAKNSPFAENDND) is disordered. Asp-1148 serves as the catalytic Proton acceptor. Residue Tyr-1174 is modified to Phosphotyrosine; by autocatalysis. The interval 1316 to 1363 (DTETEMYPSGSEFSSTPSPPSETPYSHMNGSHPQNGSMNLRIPKSTLC) is disordered. A compositionally biased stretch (low complexity) spans 1322–1331 (YPSGSEFSST). The segment covering 1343 to 1353 (MNGSHPQNGSM) has biased composition (polar residues).

The protein belongs to the protein kinase superfamily. Tyr protein kinase family. Insulin receptor subfamily. In terms of assembly, probable tetramer of 2 alpha and 2 beta chains linked by disulfide bonds. The alpha chains contribute to the formation of the ligand-binding domain, while the beta chains carry the kinase domain. Mn(2+) is required as a cofactor.

It is found in the membrane. It carries out the reaction L-tyrosyl-[protein] + ATP = O-phospho-L-tyrosyl-[protein] + ADP + H(+). Its function is as follows. This receptor binds to the insulin related peptide and has a tyrosine-protein kinase activity. This is Insulin-like peptide receptor from Branchiostoma lanceolatum (Common lancelet).